A 243-amino-acid polypeptide reads, in one-letter code: Adenosylcobinamide-GDP ribazoletransferase (243 aa).

The next 5 membrane-spanning stretches (helical) occupy residues 31-51 (LLFYPLVGAVFGTLLLGFNTL), 55-75 (APLMLHAALVLTAWVLLSGGL), 109-129 (IAVVTLVLVLLLKFAAILALI), 133-153 (ASVWLLLAPVIGRAAMLGLFL), and 188-208 (VLLAGWSGVAVLLVCAVCFFW).

Belongs to the CobS family. Requires Mg(2+) as cofactor.

The protein resides in the cell inner membrane. The enzyme catalyses alpha-ribazole + adenosylcob(III)inamide-GDP = adenosylcob(III)alamin + GMP + H(+). It carries out the reaction alpha-ribazole 5'-phosphate + adenosylcob(III)inamide-GDP = adenosylcob(III)alamin 5'-phosphate + GMP + H(+). Its pathway is cofactor biosynthesis; adenosylcobalamin biosynthesis; adenosylcobalamin from cob(II)yrinate a,c-diamide: step 7/7. Joins adenosylcobinamide-GDP and alpha-ribazole to generate adenosylcobalamin (Ado-cobalamin). Also synthesizes adenosylcobalamin 5'-phosphate from adenosylcobinamide-GDP and alpha-ribazole 5'-phosphate. This chain is Adenosylcobinamide-GDP ribazoletransferase, found in Pseudomonas syringae pv. syringae (strain B728a).